The sequence spans 98 residues: NADH-ubiquinone oxidoreductase chain 4L (98 aa).

3 helical membrane passes run 1–21 (MTLI…GLLM), 29–49 (ALLC…LTIL), and 61–81 (IILL…LVTI).

This sequence belongs to the complex I subunit 4L family. In terms of assembly, core subunit of respiratory chain NADH dehydrogenase (Complex I) which is composed of 45 different subunits.

The protein resides in the mitochondrion inner membrane. It carries out the reaction a ubiquinone + NADH + 5 H(+)(in) = a ubiquinol + NAD(+) + 4 H(+)(out). Core subunit of the mitochondrial membrane respiratory chain NADH dehydrogenase (Complex I) which catalyzes electron transfer from NADH through the respiratory chain, using ubiquinone as an electron acceptor. Part of the enzyme membrane arm which is embedded in the lipid bilayer and involved in proton translocation. The chain is NADH-ubiquinone oxidoreductase chain 4L (MT-ND4L) from Eubalaena australis (Southern right whale).